A 488-amino-acid polypeptide reads, in one-letter code: Bifunctional protein HldE (488 aa).

A ribokinase region spans residues 1–330; that stretch reads MDRKSIESIF…NAVALAHSDS (330 aa). Position 205–208 (205–208) interacts with ATP; it reads NRRE. Residue Asp-275 is part of the active site. The segment at 356–488 is cytidylyltransferase; the sequence is FTNGCFDLLH…IIERVLERYS (133 aa).

In the N-terminal section; belongs to the carbohydrate kinase PfkB family. The protein in the C-terminal section; belongs to the cytidylyltransferase family. Homodimer.

It catalyses the reaction D-glycero-beta-D-manno-heptose 7-phosphate + ATP = D-glycero-beta-D-manno-heptose 1,7-bisphosphate + ADP + H(+). It carries out the reaction D-glycero-beta-D-manno-heptose 1-phosphate + ATP + H(+) = ADP-D-glycero-beta-D-manno-heptose + diphosphate. The protein operates within nucleotide-sugar biosynthesis; ADP-L-glycero-beta-D-manno-heptose biosynthesis; ADP-L-glycero-beta-D-manno-heptose from D-glycero-beta-D-manno-heptose 7-phosphate: step 1/4. It participates in nucleotide-sugar biosynthesis; ADP-L-glycero-beta-D-manno-heptose biosynthesis; ADP-L-glycero-beta-D-manno-heptose from D-glycero-beta-D-manno-heptose 7-phosphate: step 3/4. Functionally, catalyzes the phosphorylation of D-glycero-D-manno-heptose 7-phosphate at the C-1 position to selectively form D-glycero-beta-D-manno-heptose-1,7-bisphosphate. In terms of biological role, catalyzes the ADP transfer from ATP to D-glycero-beta-D-manno-heptose 1-phosphate, yielding ADP-D-glycero-beta-D-manno-heptose. This chain is Bifunctional protein HldE, found in Pelobacter propionicus (strain DSM 2379 / NBRC 103807 / OttBd1).